Consider the following 318-residue polypeptide: tRNA uridine(34) hydroxylase (318 aa).

The 95-residue stretch at 123-217 (EDDDTVIIDA…YGKDPETKGE (95 aa)) folds into the Rhodanese domain. The active-site Cysteine persulfide intermediate is the Cys177.

It belongs to the TrhO family.

The catalysed reaction is uridine(34) in tRNA + AH2 + O2 = 5-hydroxyuridine(34) in tRNA + A + H2O. Functionally, catalyzes oxygen-dependent 5-hydroxyuridine (ho5U) modification at position 34 in tRNAs. This chain is tRNA uridine(34) hydroxylase, found in Staphylococcus aureus (strain MSSA476).